A 164-amino-acid chain; its full sequence is Putative 4-hydroxy-4-methyl-2-oxoglutarate aldolase (164 aa).

Substrate-binding positions include 80 to 83 (GGNL) and R102. D103 is an a divalent metal cation binding site.

The protein belongs to the class II aldolase/RraA-like family. In terms of assembly, homotrimer. Requires a divalent metal cation as cofactor.

It catalyses the reaction 4-hydroxy-4-methyl-2-oxoglutarate = 2 pyruvate. It carries out the reaction oxaloacetate + H(+) = pyruvate + CO2. Functionally, catalyzes the aldol cleavage of 4-hydroxy-4-methyl-2-oxoglutarate (HMG) into 2 molecules of pyruvate. Also contains a secondary oxaloacetate (OAA) decarboxylase activity due to the common pyruvate enolate transition state formed following C-C bond cleavage in the retro-aldol and decarboxylation reactions. This chain is Putative 4-hydroxy-4-methyl-2-oxoglutarate aldolase, found in Paraburkholderia phytofirmans (strain DSM 17436 / LMG 22146 / PsJN) (Burkholderia phytofirmans).